A 168-amino-acid polypeptide reads, in one-letter code: MQSTCVYRECMRNHAAKLGSYAIDGCREYSQPSTGDLCVACGCHRSYHRRIDVISSPQINHTRFPFTSLRRVKQLARLKWKTAEERNEEEEDDTEETSTEEKMTVQRRRKSKFTAEQREAMKDYAAKLGWTLKDKRALREEIRVFCEGIGVTRYHFKTWVNNNKKFYH.

Residues 7–51 form a ZF-HD dimerization-type; degenerate zinc finger; that stretch reads YRECMRNHAAKLGSYAIDGCREYSQPSTGDLCVACGCHRSYHRRI. A coiled-coil region spans residues 76-103; that stretch reads ARLKWKTAEERNEEEEDDTEETSTEEKM. The segment at 82–112 is disordered; that stretch reads TAEERNEEEEDDTEETSTEEKMTVQRRRKSK. The span at 86-98 shows a compositional bias: acidic residues; sequence RNEEEEDDTEETS. Positions 106-168 form a DNA-binding region, homeobox; that stretch reads QRRRKSKFTA…WVNNNKKFYH (63 aa).

As to quaternary structure, homo- and heterodimer with other ZFHD proteins. Interacts with ZHD11. Mostly expressed in flowers and stems.

Its subcellular location is the nucleus. Putative transcription factor. The sequence is that of Zinc-finger homeodomain protein 14 (ZHD14) from Arabidopsis thaliana (Mouse-ear cress).